The following is a 207-amino-acid chain: Guanylate kinase (207 aa).

Positions 4–184 (NMYYAISAPS…TLNKIKTIII (181 aa)) constitute a Guanylate kinase-like domain. 11–18 (APSGTGKS) is an ATP binding site.

It belongs to the guanylate kinase family.

The protein resides in the cytoplasm. It catalyses the reaction GMP + ATP = GDP + ADP. Essential for recycling GMP and indirectly, cGMP. This Wigglesworthia glossinidia brevipalpis protein is Guanylate kinase.